The chain runs to 120 residues: uncharacterized protein (120 aa).

The region spanning 13–119 (VIDKDICKGM…YGLWMAANEE (107 aa)) is the PRD domain.

This is an uncharacterized protein from Escherichia coli (strain K12).